We begin with the raw amino-acid sequence, 997 residues long: Protein translocase subunit SecA (997 aa).

ATP-binding positions include Gln-84, 102-106 (GEGKT), and Asp-582. The tract at residues 950–997 (PYVPVPEAKPEPSEVFGVERKRATPPPQPGLSRAERRRLMRQEKKRKK) is disordered. Residues 957–971 (AKPEPSEVFGVERKR) show a composition bias toward basic and acidic residues. The segment covering 984 to 997 (ERRRLMRQEKKRKK) has biased composition (basic residues).

It belongs to the SecA family. As to quaternary structure, part of the essential Sec protein translocation apparatus which comprises SecA, SecYEG and auxiliary proteins SecDF. Other proteins may also be involved. Monomer and homodimer.

Its subcellular location is the cell inner membrane. The protein localises to the cytoplasm. The catalysed reaction is ATP + H2O + cellular proteinSide 1 = ADP + phosphate + cellular proteinSide 2.. Part of the Sec protein translocase complex. Interacts with the SecYEG preprotein conducting channel. Has a central role in coupling the hydrolysis of ATP to the transfer of proteins into and across the cell membrane, serving as an ATP-driven molecular motor driving the stepwise translocation of polypeptide chains across the membrane. The chain is Protein translocase subunit SecA from Thermus thermophilus (strain ATCC 27634 / DSM 579 / HB8).